The following is a 777-amino-acid chain: MAAPPDLQDEPLSPANPGSQLFGGRGEGEEATPKGARPAQQDGEPAWGSGAGAGVVSSRGLCSGPARSPPVAMETASTGVAAVPDALDHSSSPTLKDGEGACYTSLISDICYPPREDSAYFTGILQKENGHITTSESPEELGTPGPSLPEVPGTEPHGLLSSDSGIEMTPAESTEVNKILADPLDQMKAEACKYIDITRPQEAKGQEEQSPGLEDKDLDFKDKDSEVSTKPEGVHAPNQPSPVEGKLIKDNLFEESTFAPYIDELSDEQHRMSLVTAPVKITLTEIGPPVMTATHETIPEKQDLCLKPSPDTVPTVTVSEPEDDSPGSVTPPSSGTEPSAAESQGKGSVSEDELIAAIKEAKGLSYETTESPRPVGQAADRPKVKARSGLPTIPSSLDQEASSAESGDSEIELVSEDPMASEDALPSGYVSFGHVSGPPPSPASPSIQYSILREEREAELDSELIIESCDASSASEESPKREQDSPPMKPGVLDAIREETSSRATEERAPSHQGPVEPDPILSFTPVTLQSRPEPSSGDGAPVPEPPKSQQQKPEEEAVSSSQSPAATEIPGPLGSDLVPPLPFFNKQKAIDLLYWRDIKQTGIVFGSFLLLLFSLTQFSVVSVVAYLALAALSATISFRIYKSVLQAVQKTDEGHPFKAYLELEITLSQEQIQKYTDCLQLYVNSTLKELRRLFLVQDLVDSLKFAVLMWLLTYVGALFNGLTLLLMAVVSMFTLPVVYVKHQAQVDQYLGLVRTHINTVVAKIQAKIPGAKRHAE.

4 disordered regions span residues 1–77 (MAAP…ETAS), 129–182 (NGHI…ILAD), 198–245 (TRPQ…PVEG), and 293–573 (ATHE…IPGP). Phosphoserine occurs at positions 13 and 68. Positions 199-233 (RPQEAKGQEEQSPGLEDKDLDFKDKDSEVSTKPEG) are enriched in basic and acidic residues. 3 positions are modified to phosphoserine: Ser210, Ser241, and Ser325. Residues 326–339 (PGSVTPPSSGTEPS) are compositionally biased toward low complexity. Residues Ser348 and Ser350 each carry the phosphoserine modification. Positions 393-406 (IPSSLDQEASSAES) are enriched in polar residues. Ser485 carries the post-translational modification Phosphoserine. A compositionally biased stretch (basic and acidic residues) spans 495–510 (AIREETSSRATEERAP). A compositionally biased stretch (polar residues) spans 525–534 (TPVTLQSRPE). Positions 590–777 (AIDLLYWRDI…KIPGAKRHAE (188 aa)) constitute a Reticulon domain. The next 2 membrane-spanning stretches (helical) occupy residues 604–624 (IVFG…VVSV) and 706–726 (FAVL…LTLL).

Interacts with NDRG1. Interacts with BACE1. Interacts with TMEM33. As to quaternary structure, interacts with UGCG; regulates the ceramide glucosyltransferase activity of UGCG. Expressed predominantly in central and peripheral nervous system of newborn and adult rats. Low levels have been also detected in heart, adrenal gland and spleen. Expression of isoform RTN1-B is restricted to particular neuronal types.

Its subcellular location is the endoplasmic reticulum membrane. It localises to the golgi apparatus membrane. In terms of biological role, inhibits amyloid precursor protein processing, probably by blocking BACE1 activity. The protein is Reticulon-1 (Rtn1) of Rattus norvegicus (Rat).